A 203-amino-acid polypeptide reads, in one-letter code: FMN-dependent NADH:quinone oxidoreductase (203 aa).

Residues serine 9, 15 to 17 (SVS), and 138 to 141 (SRGG) each bind FMN.

Belongs to the azoreductase type 1 family. Homodimer. It depends on FMN as a cofactor.

The catalysed reaction is 2 a quinone + NADH + H(+) = 2 a 1,4-benzosemiquinone + NAD(+). It catalyses the reaction N,N-dimethyl-1,4-phenylenediamine + anthranilate + 2 NAD(+) = 2-(4-dimethylaminophenyl)diazenylbenzoate + 2 NADH + 2 H(+). In terms of biological role, quinone reductase that provides resistance to thiol-specific stress caused by electrophilic quinones. Its function is as follows. Also exhibits azoreductase activity. Catalyzes the reductive cleavage of the azo bond in aromatic azo compounds to the corresponding amines. The chain is FMN-dependent NADH:quinone oxidoreductase from Methylorubrum populi (strain ATCC BAA-705 / NCIMB 13946 / BJ001) (Methylobacterium populi).